Consider the following 125-residue polypeptide: Large ribosomal subunit protein bL12 (125 aa).

This sequence belongs to the bacterial ribosomal protein bL12 family. In terms of assembly, homodimer. Part of the ribosomal stalk of the 50S ribosomal subunit. Forms a multimeric L10(L12)X complex, where L10 forms an elongated spine to which 2 to 4 L12 dimers bind in a sequential fashion. Binds GTP-bound translation factors.

Functionally, forms part of the ribosomal stalk which helps the ribosome interact with GTP-bound translation factors. Is thus essential for accurate translation. The polypeptide is Large ribosomal subunit protein bL12 (Rickettsia conorii (strain ATCC VR-613 / Malish 7)).